The sequence spans 340 residues: MKSLAKLKSEKGIWLHDSEMPTVGHNDILIKIRKTAICGTDMHIYNWDEWSQNTIPVPMVVGHEYVGEVVEIGEEVRGFAIGDRVSGEGHITCGHCRNCRAGRRHLCRNTSGVGVNRAGAFAEYLSIPAFNAFKIPDNISDDLAAIFDPFGNAVHTALSFDLVGEDVLITGAGPIGIMAAAVAQHVGARHVVITDVNEYRLDLARKMGASRAVNVAKESLKDVMNDLGMSEGFDVGLEMSGVPAAFRDMLDKMNHGGKVAMLGIPSGDVAVDWNKVIFKGLVIKGIYGREMFETWYKMASLIQGGLNLAPIITHQFNIDEFQQGFDTMGSGQSGKVILNW.

Residue cysteine 38 participates in Zn(2+) binding. Active-site charge relay system residues include threonine 40 and histidine 43. Positions 63, 64, 93, 96, 99, and 107 each coordinate Zn(2+). NAD(+)-binding positions include isoleucine 175, aspartate 195, arginine 200, 262–264 (LGI), and 286–287 (IY).

It belongs to the zinc-containing alcohol dehydrogenase family. Homotetramer. It depends on Zn(2+) as a cofactor.

The protein resides in the cytoplasm. It catalyses the reaction L-threonine + NAD(+) = (2S)-2-amino-3-oxobutanoate + NADH + H(+). It participates in amino-acid degradation; L-threonine degradation via oxydo-reductase pathway; glycine from L-threonine: step 1/2. In terms of biological role, catalyzes the NAD(+)-dependent oxidation of L-threonine to 2-amino-3-ketobutyrate. In Pseudoalteromonas atlantica (strain T6c / ATCC BAA-1087), this protein is L-threonine 3-dehydrogenase.